The primary structure comprises 351 residues: Nicotinate-nucleotide--dimethylbenzimidazole phosphoribosyltransferase (351 aa).

The active-site Proton acceptor is E317.

It belongs to the CobT family.

It catalyses the reaction 5,6-dimethylbenzimidazole + nicotinate beta-D-ribonucleotide = alpha-ribazole 5'-phosphate + nicotinate + H(+). The protein operates within nucleoside biosynthesis; alpha-ribazole biosynthesis; alpha-ribazole from 5,6-dimethylbenzimidazole: step 1/2. Functionally, catalyzes the synthesis of alpha-ribazole-5'-phosphate from nicotinate mononucleotide (NAMN) and 5,6-dimethylbenzimidazole (DMB). The protein is Nicotinate-nucleotide--dimethylbenzimidazole phosphoribosyltransferase of Pseudomonas putida (strain W619).